We begin with the raw amino-acid sequence, 178 residues long: ATP synthase subunit delta (178 aa).

The protein belongs to the ATPase delta chain family. As to quaternary structure, F-type ATPases have 2 components, F(1) - the catalytic core - and F(0) - the membrane proton channel. F(1) has five subunits: alpha(3), beta(3), gamma(1), delta(1), epsilon(1). F(0) has three main subunits: a(1), b(2) and c(10-14). The alpha and beta chains form an alternating ring which encloses part of the gamma chain. F(1) is attached to F(0) by a central stalk formed by the gamma and epsilon chains, while a peripheral stalk is formed by the delta and b chains.

The protein localises to the cell membrane. Functionally, f(1)F(0) ATP synthase produces ATP from ADP in the presence of a proton or sodium gradient. F-type ATPases consist of two structural domains, F(1) containing the extramembraneous catalytic core and F(0) containing the membrane proton channel, linked together by a central stalk and a peripheral stalk. During catalysis, ATP synthesis in the catalytic domain of F(1) is coupled via a rotary mechanism of the central stalk subunits to proton translocation. In terms of biological role, this protein is part of the stalk that links CF(0) to CF(1). It either transmits conformational changes from CF(0) to CF(1) or is implicated in proton conduction. In Anoxybacillus flavithermus (strain DSM 21510 / WK1), this protein is ATP synthase subunit delta.